Here is a 281-residue protein sequence, read N- to C-terminus: uncharacterized protein (281 aa).

Disordered regions lie at residues 192–212 (SNSS…IQET) and 227–281 (EDYV…SEEY). Positions 200-211 (MDKKSDDSKIQE) are enriched in basic and acidic residues. 2 stretches are compositionally biased toward acidic residues: residues 227-240 (EDYV…ISDN) and 249-260 (DTDSDLGDLEDP).

Belongs to the cullin family.

This is an uncharacterized protein from Acanthamoeba polyphaga (Amoeba).